We begin with the raw amino-acid sequence, 291 residues long: N-acetylmannosamine kinase (291 aa).

ATP contacts are provided by residues 5–12 (AIDIGGTK) and 132–139 (GVGGGVVS). Zn(2+)-binding residues include His-156, Cys-166, Cys-168, and Cys-173.

The protein belongs to the ROK (NagC/XylR) family. NanK subfamily. As to quaternary structure, homodimer.

The enzyme catalyses an N-acyl-D-mannosamine + ATP = an N-acyl-D-mannosamine 6-phosphate + ADP + H(+). It participates in amino-sugar metabolism; N-acetylneuraminate degradation; D-fructose 6-phosphate from N-acetylneuraminate: step 2/5. Functionally, catalyzes the phosphorylation of N-acetylmannosamine (ManNAc) to ManNAc-6-P. This is N-acetylmannosamine kinase (nanK1) from Escherichia coli O6:H1 (strain CFT073 / ATCC 700928 / UPEC).